Consider the following 232-residue polypeptide: Enolase-phosphatase E1 (232 aa).

The protein belongs to the HAD-like hydrolase superfamily. MasA/MtnC family. In terms of assembly, monomer. It depends on Mg(2+) as a cofactor.

It catalyses the reaction 5-methylsulfanyl-2,3-dioxopentyl phosphate + H2O = 1,2-dihydroxy-5-(methylsulfanyl)pent-1-en-3-one + phosphate. It participates in amino-acid biosynthesis; L-methionine biosynthesis via salvage pathway; L-methionine from S-methyl-5-thio-alpha-D-ribose 1-phosphate: step 3/6. It functions in the pathway amino-acid biosynthesis; L-methionine biosynthesis via salvage pathway; L-methionine from S-methyl-5-thio-alpha-D-ribose 1-phosphate: step 4/6. Bifunctional enzyme that catalyzes the enolization of 2,3-diketo-5-methylthiopentyl-1-phosphate (DK-MTP-1-P) into the intermediate 2-hydroxy-3-keto-5-methylthiopentenyl-1-phosphate (HK-MTPenyl-1-P), which is then dephosphorylated to form the acireductone 1,2-dihydroxy-3-keto-5-methylthiopentene (DHK-MTPene). The sequence is that of Enolase-phosphatase E1 from Xylella fastidiosa (strain Temecula1 / ATCC 700964).